We begin with the raw amino-acid sequence, 140 residues long: Nucleoside diphosphate kinase (140 aa).

ATP-binding residues include Lys-11, Phe-59, Arg-87, Thr-93, Arg-104, and Asn-114. The Pros-phosphohistidine intermediate role is filled by His-117.

This sequence belongs to the NDK family. In terms of assembly, homotetramer. The cofactor is Mg(2+).

It is found in the cytoplasm. It carries out the reaction a 2'-deoxyribonucleoside 5'-diphosphate + ATP = a 2'-deoxyribonucleoside 5'-triphosphate + ADP. The catalysed reaction is a ribonucleoside 5'-diphosphate + ATP = a ribonucleoside 5'-triphosphate + ADP. In terms of biological role, major role in the synthesis of nucleoside triphosphates other than ATP. The ATP gamma phosphate is transferred to the NDP beta phosphate via a ping-pong mechanism, using a phosphorylated active-site intermediate. This Rickettsia bellii (strain OSU 85-389) protein is Nucleoside diphosphate kinase.